We begin with the raw amino-acid sequence, 208 residues long: Putative dioxygenase RF_0617 (208 aa).

This sequence belongs to the intradiol ring-cleavage dioxygenase family.

The protein is Putative dioxygenase RF_0617 of Rickettsia felis (strain ATCC VR-1525 / URRWXCal2) (Rickettsia azadi).